A 242-amino-acid polypeptide reads, in one-letter code: Pyridoxine 5'-phosphate synthase (242 aa).

N7 lines the 3-amino-2-oxopropyl phosphate pocket. 9–10 lines the 1-deoxy-D-xylulose 5-phosphate pocket; sequence DH. R18 contacts 3-amino-2-oxopropyl phosphate. H44 functions as the Proton acceptor in the catalytic mechanism. R46 and H51 together coordinate 1-deoxy-D-xylulose 5-phosphate. E71 acts as the Proton acceptor in catalysis. T101 contributes to the 1-deoxy-D-xylulose 5-phosphate binding site. H192 (proton donor) is an active-site residue. 3-amino-2-oxopropyl phosphate-binding positions include G193 and 214-215; that span reads GH.

Belongs to the PNP synthase family. Homooctamer; tetramer of dimers.

Its subcellular location is the cytoplasm. The catalysed reaction is 3-amino-2-oxopropyl phosphate + 1-deoxy-D-xylulose 5-phosphate = pyridoxine 5'-phosphate + phosphate + 2 H2O + H(+). It participates in cofactor biosynthesis; pyridoxine 5'-phosphate biosynthesis; pyridoxine 5'-phosphate from D-erythrose 4-phosphate: step 5/5. Functionally, catalyzes the complicated ring closure reaction between the two acyclic compounds 1-deoxy-D-xylulose-5-phosphate (DXP) and 3-amino-2-oxopropyl phosphate (1-amino-acetone-3-phosphate or AAP) to form pyridoxine 5'-phosphate (PNP) and inorganic phosphate. In Synechocystis sp. (strain ATCC 27184 / PCC 6803 / Kazusa), this protein is Pyridoxine 5'-phosphate synthase.